A 620-amino-acid polypeptide reads, in one-letter code: Glutathione-regulated potassium-efflux system protein KefC (620 aa).

A run of 12 helical transmembrane segments spans residues 4 to 24 (HTLI…PIAV), 26 to 46 (LGLG…PWGL), 54 to 74 (SILH…GLEL), 90 to 110 (GALQ…LLGL), 114 to 134 (VAEL…MQAM), 149 to 169 (FAVL…IPLL), 178 to 198 (MGAF…VVLL), 218 to 238 (VFSA…EEVG), 270 to 290 (GLLL…GTLL), 294 to 314 (LRIV…LWLI), 327 to 347 (WFAV…GAAQ), and 359 to 379 (SLTL…VILN). One can recognise an RCK N-terminal domain in the interval 399-518 (QPRVIIAGFG…AGVEKPERET (120 aa)). The disordered stretch occupies residues 597 to 620 (GWQGTEEGKHTGNMADEPETKPSS).

It belongs to the monovalent cation:proton antiporter 2 (CPA2) transporter (TC 2.A.37) family. KefC subfamily. In terms of assembly, homodimer. Interacts with the regulatory subunit KefF.

The protein resides in the cell inner membrane. Pore-forming subunit of a potassium efflux system that confers protection against electrophiles. Catalyzes K(+)/H(+) antiport. This chain is Glutathione-regulated potassium-efflux system protein KefC, found in Escherichia coli (strain K12 / MC4100 / BW2952).